A 348-amino-acid chain; its full sequence is Haptoglobin-related protein (348 aa).

The segment at residues 1-18 is a signal peptide (not cleaved); that stretch reads MSDLGAVISLLLWGRQLF. Residues 34 to 87 form the Sushi domain; sequence FPKPPEIANGYVEHLFRYQCKNYYRLRTEGDGVYTLNDKKQWINKAVGDKLPEC. The Peptidase S1 domain maps to 104–346; it reads ILGGHLDAKG…IQHWVQKTIA (243 aa). Intrachain disulfides connect cysteine 251–cysteine 282 and cysteine 293–cysteine 323.

This sequence belongs to the peptidase S1 family. In adult liver the amount of HPR mRNA is at the lower limit of detection, therefore the extent of its expression is at most less than 1000-fold that of the HP1F gene. No HPR mRNA can be detected in fetal liver. Expressed in Hep-G2 and leukemia MOLT-4 cell lines.

The protein localises to the secreted. Primate-specific plasma protein associated with apolipoprotein L-I (apoL-I)-containing high-density lipoprotein (HDL). This HDL particle, termed trypanosome lytic factor-1 (TLF-1), mediates human innate immune protection against many species of African trypanosomes. Binds hemoglobin with high affinity and may contribute to the clearance of cell-free hemoglobin to allow hepatic recycling of heme iron. The protein is Haptoglobin-related protein (HPR) of Homo sapiens (Human).